The following is a 216-amino-acid chain: Pyridoxine/pyridoxamine 5'-phosphate oxidase 1 (216 aa).

Residues 10-13 (RREY) and Lys68 each bind substrate. FMN contacts are provided by residues 63–68 (RIVLLK), 78–79 (YT), Lys85, and Gln107. Substrate is bound by residues Tyr125, Arg129, and Ser133. FMN-binding positions include 142–143 (QS) and Trp186. 192 to 194 (RLH) contacts substrate. Residue Arg196 coordinates FMN.

Belongs to the pyridoxamine 5'-phosphate oxidase family. As to quaternary structure, homodimer. Requires FMN as cofactor.

The catalysed reaction is pyridoxamine 5'-phosphate + O2 + H2O = pyridoxal 5'-phosphate + H2O2 + NH4(+). The enzyme catalyses pyridoxine 5'-phosphate + O2 = pyridoxal 5'-phosphate + H2O2. The protein operates within cofactor metabolism; pyridoxal 5'-phosphate salvage; pyridoxal 5'-phosphate from pyridoxamine 5'-phosphate: step 1/1. Its pathway is cofactor metabolism; pyridoxal 5'-phosphate salvage; pyridoxal 5'-phosphate from pyridoxine 5'-phosphate: step 1/1. Its function is as follows. Catalyzes the oxidation of either pyridoxine 5'-phosphate (PNP) or pyridoxamine 5'-phosphate (PMP) into pyridoxal 5'-phosphate (PLP). This chain is Pyridoxine/pyridoxamine 5'-phosphate oxidase 1, found in Hydrogenovibrio crunogenus (strain DSM 25203 / XCL-2) (Thiomicrospira crunogena).